Consider the following 201-residue polypeptide: MAGSFAQLARAADKARDTMLVPKTALETPPLEIHTLGADALRQPAQRIGKVNDQVRELARDMLRSMYTAKGIGLAAPQVAVYQQLLVIDLDLENAATPPLVLINPEITAASAGLDTYEEGCLSIPGVYLDVVRPTAIELSYRDEMGRPRKMKADGLMARCIQHEMDHLNGVLFVDRVTDQAGLQKELKENGFQSKHVQSVS.

Cys-121 and His-163 together coordinate Fe cation. Glu-164 is a catalytic residue. Residue His-167 participates in Fe cation binding.

Belongs to the polypeptide deformylase family. The cofactor is Fe(2+).

It catalyses the reaction N-terminal N-formyl-L-methionyl-[peptide] + H2O = N-terminal L-methionyl-[peptide] + formate. Functionally, removes the formyl group from the N-terminal Met of newly synthesized proteins. Requires at least a dipeptide for an efficient rate of reaction. N-terminal L-methionine is a prerequisite for activity but the enzyme has broad specificity at other positions. The polypeptide is Peptide deformylase (Synechococcus sp. (strain CC9902)).